The sequence spans 822 residues: Lysine-specific histone demethylase 2 (822 aa).

Residues Met-1–Lys-11 show a composition bias toward basic residues. The interval Met-1–Glu-47 is disordered. Ser-13, Ser-17, and Ser-26 each carry phosphoserine. Positions 53, 58, 65, 73, 84, 90, 92, 95, 142, 147, 169, and 185 each coordinate Zn(2+). Residues Asp-133 to Val-193 form a CW-type zinc finger. Ser-247 carries the phosphoserine modification. The GLYR1-binding stretch occupies residues Tyr-273–Asp-292. The SWIRM domain occupies Pro-275–Gln-373. An FAD-binding site is contributed by Lys-383 to Val-439. Histone H3-binding regions lie at residues Ile-438–Leu-467, Phe-487–Arg-498, and Phe-538–His-572. Residues Phe-564 to Ala-566 are GLYR1-binding. FAD is bound by residues Val-598, Glu-795, and Gln-803 to Val-805. Residues Asn-798–Arg-814 form a GLYR1-binding region.

It belongs to the flavin monoamine oxidase family. As to quaternary structure, interacts with its cofactor GLYR1 at nucleosomes; this interaction stimulates H3K4me1 and H3K4me2 demethylation. In contrast to KDM1A, does not form a complex with RCOR1/CoREST. Possible accessory component of the polycomb repressive deubiquitinase (PR-DUB) complex, at least composed of BAP1, one of ASXL1, ASXL2 or (probably) ASXL3 and one of MBD5 or MBD6. The PR-DUB core associates with a number of accessory proteins, including FOXK1, FOXK2, KDM1B, HCFC1 and OGT; KDM1B specifically associates with ASXL2 PR-DUB complexes. It depends on FAD as a cofactor. Zn(2+) serves as cofactor.

It is found in the nucleus. The protein resides in the chromosome. The catalysed reaction is N(6),N(6)-dimethyl-L-lysyl(4)-[histone H3] + 2 A + 2 H2O = L-lysyl(4)-[histone H3] + 2 formaldehyde + 2 AH2. It catalyses the reaction N(6)-methyl-L-lysyl(4)-[histone H3] + A + H2O = L-lysyl(4)-[histone H3] + formaldehyde + AH2. Its activity is regulated as follows. Histone H3K4me1 and H3K4me2 demethylase activity is inhibited by DNA, this inhibition is released in complex with GLYR1. Its function is as follows. Histone demethylase that demethylates 'Lys-4' of histone H3, a specific tag for epigenetic transcriptional activation, thereby acting as a corepressor. Required for de novo DNA methylation of a subset of imprinted genes during oogenesis. Acts by oxidizing the substrate by FAD to generate the corresponding imine that is subsequently hydrolyzed. Demethylates both mono- and di-methylated 'Lys-4' of histone H3. Has no effect on tri-methylated 'Lys-4', mono-, di- or tri-methylated 'Lys-9', mono-, di- or tri-methylated 'Lys-27', mono-, di- or tri-methylated 'Lys-36' of histone H3, or on mono-, di- or tri-methylated 'Lys-20' of histone H4. Alone, it is unable to demethylate H3K4me on nucleosomes and requires the presence of GLYR1 to achieve such activity, they form a multifunctional enzyme complex that modifies transcribed chromatin and facilitates Pol II transcription through nucleosomes. The protein is Lysine-specific histone demethylase 2 of Homo sapiens (Human).